Reading from the N-terminus, the 398-residue chain is tRNA(Ile)-lysidine synthase (398 aa).

17 to 22 (SGGPDS) provides a ligand contact to ATP.

It belongs to the tRNA(Ile)-lysidine synthase family.

It is found in the cytoplasm. It carries out the reaction cytidine(34) in tRNA(Ile2) + L-lysine + ATP = lysidine(34) in tRNA(Ile2) + AMP + diphosphate + H(+). Its function is as follows. Ligates lysine onto the cytidine present at position 34 of the AUA codon-specific tRNA(Ile) that contains the anticodon CAU, in an ATP-dependent manner. Cytidine is converted to lysidine, thus changing the amino acid specificity of the tRNA from methionine to isoleucine. This chain is tRNA(Ile)-lysidine synthase, found in Mesoplasma florum (strain ATCC 33453 / NBRC 100688 / NCTC 11704 / L1) (Acholeplasma florum).